The sequence spans 169 residues: Myosin regulatory light chain 2, skeletal muscle isoform A (169 aa).

Serine 21 carries the phosphoserine modification. 3 EF-hand domains span residues 26–61 (SQIQEYKEAFTIIDQNRDGIISKDDLRDVLASMGQL), 96–131 (DPEDVIVSAFKVLDPEGTGSIKKEFLEELLTTQCDR), and 132–167 (FTAEEMKNLWAAFPPDVAGNVDYKNICYVITHGEEK). Residues aspartate 39, asparagine 41, aspartate 43, and aspartate 50 each contribute to the Ca(2+) site.

As to quaternary structure, myosin is a hexamer of 2 heavy chains and 4 light chains. Interacts with nanos3; the interaction negatively regulates mylpfa phosphorylation.

In terms of biological role, myosin regulatory subunit that plays a role to maintain muscle integrity during early development. Plays a role in muscle contraction. This chain is Myosin regulatory light chain 2, skeletal muscle isoform A (mylpfa), found in Danio rerio (Zebrafish).